The following is a 61-amino-acid chain: Small ribosomal subunit protein uS14 (61 aa).

4 residues coordinate Zn(2+): Cys-24, Cys-27, Cys-40, and Cys-43.

This sequence belongs to the universal ribosomal protein uS14 family. Zinc-binding uS14 subfamily. As to quaternary structure, part of the 30S ribosomal subunit. Contacts proteins S3 and S10. Zn(2+) is required as a cofactor.

Functionally, binds 16S rRNA, required for the assembly of 30S particles and may also be responsible for determining the conformation of the 16S rRNA at the A site. This chain is Small ribosomal subunit protein uS14, found in Mycoplasma genitalium (strain ATCC 33530 / DSM 19775 / NCTC 10195 / G37) (Mycoplasmoides genitalium).